The following is a 104-amino-acid chain: Thioredoxin (104 aa).

Residues 2 to 104 (AIVKVTDSNF…NLAEVLDKHL (103 aa)) form the Thioredoxin domain. Cysteine 29 and cysteine 32 are joined by a disulfide.

The protein belongs to the thioredoxin family.

Component of the thioredoxin-thioredoxin reductase system. Participates in various redox reactions through the reversible oxidation of its active center dithiol to a disulfide and catalyzes dithiol-disulfide exchange reactions. In Staphylococcus haemolyticus (strain JCSC1435), this protein is Thioredoxin (trxA).